Consider the following 424-residue polypeptide: Double homeobox protein 4 (424 aa).

Residues 1-10 (MALPTPSDST) are compositionally biased toward polar residues. Disordered regions lie at residues 1–24 (MALPTPSDSTLPAEARGRGRRRRL), 72–102 (SRQLRQHRRESRPWPGRRGPPEGRRKRTAVT), 218–362 (LQPS…LQEP), and 388–414 (QPLLETEAPGELEASEEAASLEAPLSE). DNA-binding regions (homeobox) lie at residues 19–78 (GRRR…LRQH) and 94–153 (GRRK…PGQG). Positions 265–274 (KSREDRDPQR) are enriched in basic and acidic residues. Composition is skewed to low complexity over residues 278–302 (PGPCAVAQPGPAQAGPQGQGVLAPP) and 319–329 (AGAAWEPQAGA). The required for interaction with EP300 and CREBBP, and for transcriptional activation of target genes stretch occupies residues 327–424 (AGAAPPPQPA…EEYRALLEEL (98 aa)). The interval 405-424 (AASLEAPLSEEEYRALLEEL) is important for transcriptional activation of target genes.

This sequence belongs to the paired homeobox family. Binds DNA as a monomer. Interacts (via C-terminus) with EP300 and CREBBP. As to expression, isoform 1: Does not seem to be expressed in normal muscle, but is detected in muscle of individuals with FSHD, and also in testis (at protein level). Isoform 1: Does not seem to be expressed in normal muscle, but in muscle of individuals with FSHD, where it may be toxic to cells. Isoform 2: Detected in skeletal muscle, fibroblasts and testis from healthy individuals.

Its subcellular location is the nucleus. The protein localises to the cytoplasm. Transcription factor that is selectively and transiently expressed in cleavage-stage embryos. Binds to double-stranded DNA elements with the consensus sequence 5'-TAATCTAATCA-3'. Binds to chromatin containing histone H3 acetylated at 'Lys-27' (H3K27ac) and promotes deacetylation of H3K27ac. In parallel, binds to chromatin that lacks histone H3 acetylation at 'Lys-27' (H3K27ac) and recruits EP300 and CREBBP to promote acetylation of histone H3 at 'Lys-27' at new sites. Involved in transcriptional regulation of numerous genes, primarily as transcriptional activator, but also mediates repression of a set of target genes. Promotes expression of ZSCAN4 and KDM4E, two proteins with essential roles during early embryogenesis. Promotes nuclear translocation of CTNNB1/beta-catenin and its subsequent activation of target genes. Heterologous expression in cultured embryonic stem cells mediates transcription of HERVL retrotransposons and transcripts derived from ACRO1 and HSATII satellite repeats. May activate expression of PITX1. May regulate microRNA (miRNA) expression. Inappropriate expression can inhibit myogenesis and promote apoptosis. In terms of biological role, probably inactive as a transcriptional activator, due to the absence of the C-terminal region that is important for transcriptional activation. Can inhibit transcriptional activation mediated by isoform 1. Heterologous expression of isoform 2 has no deleterious effect on cell survival. In Homo sapiens (Human), this protein is Double homeobox protein 4.